Reading from the N-terminus, the 249-residue chain is 3alpha-hydroxy bile acid-CoA-ester 3-dehydrogenase 2 (249 aa).

Residues 15–18 (TRGI), E38, E42, and N92 each bind NAD(+). S144 is a binding site for substrate. Active-site proton donor/acceptor residues include Y157 and K161. NAD(+) is bound by residues K161 and 190–192 (VNT).

This sequence belongs to the short-chain dehydrogenases/reductases (SDR) family. As to quaternary structure, homotetramer.

It catalyses the reaction a 3alpha-hydroxy bile acid CoA + NAD(+) = a 3-oxo bile acid CoA + NADH + H(+). The catalysed reaction is choloyl-CoA + NAD(+) = 7alpha,12alpha-dihydroxy-3-oxochol-24-oyl-CoA + NADH + H(+). It carries out the reaction chenodeoxycholoyl-CoA + NAD(+) = 7alpha-hydroxy-3-oxochol-24-oyl-CoA + NADH + H(+). The enzyme catalyses deoxycholoyl-CoA + NAD(+) = 12alpha-hydroxy-3-oxocholan-24-oyl-CoA + NADH + H(+). It catalyses the reaction lithocholoyl-CoA + NAD(+) = 3-oxocholan-24-oyl-CoA + NADH + H(+). The protein operates within lipid metabolism; bile acid biosynthesis. Functionally, involved in the multi-step bile acid 7alpha-dehydroxylation pathway that transforms primary bile acids to secondary bile acids in the human gut. Catalyzes the oxidation of C3-hydroxyl group of CoA conjugated bile acids generating a C3-oxo bile acid intermediate. Can use choloyl-CoA, chenodeoxycholoyl-CoA, deoxycholoyl-CoA, and lithocholoyl-CoA as substrates with similar efficiency. Highly prefers NAD over NADP as cosubstrate. Also catalyzes the reverse reactions; in vitro, the preferred direction of reaction depends on the pH. Has very little activity with unconjugated (non-CoA) bile acid substrates. The chain is 3alpha-hydroxy bile acid-CoA-ester 3-dehydrogenase 2 (baiA2) from Clostridium scindens (strain JCM 10418 / VPI 12708).